We begin with the raw amino-acid sequence, 43 residues long: MDFITGFFGSLNFEVIFQLTFVSLILISGPVVIFLLAIRGGDM.

The helical transmembrane segment at 15 to 35 (VIFQLTFVSLILISGPVVIFL) threads the bilayer.

The protein belongs to the Psb30/Ycf12 family. As to quaternary structure, PSII is composed of 1 copy each of membrane proteins PsbA, PsbB, PsbC, PsbD, PsbE, PsbF, PsbH, PsbI, PsbJ, PsbK, PsbL, PsbM, PsbT, PsbX, PsbY, PsbZ, Psb30/Ycf12, peripheral proteins PsbO, CyanoQ (PsbQ), PsbU, PsbV and a large number of cofactors. It forms dimeric complexes.

It is found in the cellular thylakoid membrane. Its function is as follows. A core subunit of photosystem II (PSII), probably helps stabilize the reaction center. The polypeptide is Photosystem II reaction center protein Psb30 (Picosynechococcus sp. (strain ATCC 27264 / PCC 7002 / PR-6) (Agmenellum quadruplicatum)).